Consider the following 296-residue polypeptide: MKVRVKAPCTSANLGVGFDVFGLCLKEPYDVIEVEAIDDKEIIIEVDDKNIPTDPDKNVAGIVAKKMIDDFNIGKGVKITIKKGVKAGSGLGSSAASSAGTAYAINELFKLNLDKLKLVDYASYGELASSGAKHADNVAPAIFGGFTMVTNYEPLEVLHIPIDFKLDILIAIPNISINTKEAREILPKAVGLKDLVNNVGKACGMVYALYNKDKSLFGRYMMSDKVIEPVRGKLIPNYFKIKEEVKDKVYGITISGSGPSIIAFPKEEFIDEVENILRDYYENTIRTEVGKGVEVV.

86 to 96 serves as a coordination point for ATP; that stretch reads KAGSGLGSSAA.

The protein belongs to the GHMP kinase family. Homoserine kinase subfamily.

The protein resides in the cytoplasm. The enzyme catalyses L-homoserine + ATP = O-phospho-L-homoserine + ADP + H(+). It participates in amino-acid biosynthesis; L-threonine biosynthesis; L-threonine from L-aspartate: step 4/5. Catalyzes the ATP-dependent phosphorylation of L-homoserine to L-homoserine phosphate. The chain is Homoserine kinase (thrB) from Methanocaldococcus jannaschii (strain ATCC 43067 / DSM 2661 / JAL-1 / JCM 10045 / NBRC 100440) (Methanococcus jannaschii).